The sequence spans 312 residues: Short-chain dehydrogenase/reductase pkfC (312 aa).

NADP(+)-binding residues include K56, N108, and K140. The Proton donor role is filled by S164. NADP(+) contacts are provided by Y193 and K197. Y193 serves as the catalytic Proton acceptor. K197 functions as the Lowers pKa of active site Tyr in the catalytic mechanism.

It belongs to the short-chain dehydrogenases/reductases (SDR) family.

The protein operates within secondary metabolite biosynthesis. In terms of biological role, short-chain dehydrogenase/reductase; part of the gene cluster that mediates the biosynthesis of aspernidine A, a prenylated isoindolinone. The starting point of the biosynthesis of aspernidin A is the production of orsellinaldehyde by the non-reducing polyketide synthase pkfA. Hydroxylation, methylation of one of the phenol groups, and prenylation, presumably catalyzed by the prenyltransferase pkfE, would be needed to yield aspernidine D. Subsequently, the cytochrome P450 monooxygenase pkfB is responsible for hydroxylation of aspernidine D to yield aspernidine E. The dehydrogenase pkfF may be responsible for further oxidation of aspernidine E to form a dialdehyde intermediate which is further transformed in a series of steps, some of which are enzyme-mediated, to generate aspernidine A. The possibility that additional enzymes outside of the cluster are involved in aspernidine A biosynthesis cannot be excluded. The sequence is that of Short-chain dehydrogenase/reductase pkfC from Emericella nidulans (strain FGSC A4 / ATCC 38163 / CBS 112.46 / NRRL 194 / M139) (Aspergillus nidulans).